The following is an 87-amino-acid chain: Small ribosomal subunit protein uS15 (87 aa).

Belongs to the universal ribosomal protein uS15 family. In terms of assembly, part of the 30S ribosomal subunit. Forms a bridge to the 50S subunit in the 70S ribosome, contacting the 23S rRNA.

Functionally, one of the primary rRNA binding proteins, it binds directly to 16S rRNA where it helps nucleate assembly of the platform of the 30S subunit by binding and bridging several RNA helices of the 16S rRNA. In terms of biological role, forms an intersubunit bridge (bridge B4) with the 23S rRNA of the 50S subunit in the ribosome. This is Small ribosomal subunit protein uS15 from Ruminiclostridium cellulolyticum (strain ATCC 35319 / DSM 5812 / JCM 6584 / H10) (Clostridium cellulolyticum).